Consider the following 119-residue polypeptide: Holo-[acyl-carrier-protein] synthase (119 aa).

Residues Asp-8 and Glu-58 each coordinate Mg(2+).

It belongs to the P-Pant transferase superfamily. AcpS family. Mg(2+) is required as a cofactor.

The protein resides in the cytoplasm. It carries out the reaction apo-[ACP] + CoA = holo-[ACP] + adenosine 3',5'-bisphosphate + H(+). Functionally, transfers the 4'-phosphopantetheine moiety from coenzyme A to a Ser of acyl-carrier-protein. The protein is Holo-[acyl-carrier-protein] synthase of Lactobacillus johnsonii (strain CNCM I-12250 / La1 / NCC 533).